The primary structure comprises 317 residues: MNDMTPPVPRRSVSEIEALFALPFADLMYQAQGVHRAHFDPNRIQLSTLLSIKTGGCSEDCGYCPQSVHYDAGVESQGLLDLGDVLKAARAAKDAGASRFCMGAAWRGPKQRELEPVLAMVREVKALGLETCATLGMLKDGQAEQLKEAGLDYYNHNLDTAPEFYGEIITTRDYQDRLDTLERVRRADLHVCCGGIVGMGESRTQRAGLIAQLAALDPQPESVPINLLVRVEGTPLAETEALEPLEFVRTIAVTRLCMPKSFVRLSAGRQQMSDAVQALCFLAGANSIFYGEKLLTTGNPEWERDQRLFDSLGVTAL.

Residues 42–260 (NRIQLSTLLS…IAVTRLCMPK (219 aa)) form the Radical SAM core domain. The [4Fe-4S] cluster site is built by Cys-57, Cys-61, and Cys-64. [2Fe-2S] cluster is bound by residues Cys-101, Cys-132, Cys-192, and Arg-264.

It belongs to the radical SAM superfamily. Biotin synthase family. Homodimer. [4Fe-4S] cluster serves as cofactor. [2Fe-2S] cluster is required as a cofactor.

It carries out the reaction (4R,5S)-dethiobiotin + (sulfur carrier)-SH + 2 reduced [2Fe-2S]-[ferredoxin] + 2 S-adenosyl-L-methionine = (sulfur carrier)-H + biotin + 2 5'-deoxyadenosine + 2 L-methionine + 2 oxidized [2Fe-2S]-[ferredoxin]. It functions in the pathway cofactor biosynthesis; biotin biosynthesis; biotin from 7,8-diaminononanoate: step 2/2. In terms of biological role, catalyzes the conversion of dethiobiotin (DTB) to biotin by the insertion of a sulfur atom into dethiobiotin via a radical-based mechanism. The sequence is that of Biotin synthase from Thiobacillus denitrificans (strain ATCC 25259 / T1).